A 38-amino-acid polypeptide reads, in one-letter code: Photosystem II reaction center protein M (38 aa).

A helical membrane pass occupies residues 7–27; that stretch reads GFVASILFVLVPSVFLIILYI.

This sequence belongs to the PsbM family. In terms of assembly, PSII is composed of 1 copy each of membrane proteins PsbA, PsbB, PsbC, PsbD, PsbE, PsbF, PsbH, PsbI, PsbJ, PsbK, PsbL, PsbM, PsbT, PsbX, PsbY, PsbZ, Psb30/Ycf12, peripheral proteins PsbO, CyanoQ (PsbQ), PsbU, PsbV and a large number of cofactors. It forms dimeric complexes.

Its subcellular location is the cellular thylakoid membrane. One of the components of the core complex of photosystem II (PSII). PSII is a light-driven water:plastoquinone oxidoreductase that uses light energy to abstract electrons from H(2)O, generating O(2) and a proton gradient subsequently used for ATP formation. It consists of a core antenna complex that captures photons, and an electron transfer chain that converts photonic excitation into a charge separation. This subunit is found at the monomer-monomer interface. The polypeptide is Photosystem II reaction center protein M (Nostoc sp. (strain PCC 7120 / SAG 25.82 / UTEX 2576)).